The chain runs to 616 residues: MALLQISEPGLSAAPHQRRLAAGIDLGTTNSLVATVRSGQAETLPDHEGRHLLPSVVHYQQQGHTVGYAARDNAAQDTANTISSVKRMMGRSLADIQTRYPHLPYRFKASVNGLPMIDTAAGLLNPVRVSADILKALAARASESLSGELDGVVITVPAYFDDAQRQGTKDAARLAGLHVLRLLNEPTAAAIAYGLDSGKEGVIAVYDLGGGTFDISILRLSRGVFEVLATGGDSALGGDDFDHLLADYIREQAGIADRSDNRVQRELLDAAIAAKIALSDADTVRVNVAGWQGEITREQFNDLISALVKRTLLACRRALKDAGVEPQDVLEVVMVGGSTRVPLVRERVGEFFGRTPLTAIDPDKVVAIGAAIQADILVGNKPDSEMLLLDVIPLSLGLETMGGLVEKVIPRNTTIPVARAQDFTTFKDGQTAMSIHVMQGERELVQDCRSLARFALRGIPPLPAGGAHIRVTFQVDADGLLSVTAMEKSTGVEASIQVKPSYGLTDGEIASMIKDSMSFAEQDVKARMLAEQKVEAARVLESLTGALTADAALLSAAERQCIDDAAAHLSAVAQGDDVDAIEQAIKNVDKQTQEFAARRMDQSVRRALKGHSVDEV.

This sequence belongs to the heat shock protein 70 family.

Chaperone involved in the maturation of iron-sulfur cluster-containing proteins. Has a low intrinsic ATPase activity which is markedly stimulated by HscB. Involved in the maturation of IscU. The chain is Chaperone protein HscA from Salmonella typhimurium (strain LT2 / SGSC1412 / ATCC 700720).